Reading from the N-terminus, the 992-residue chain is ATP-dependent 6-phosphofructokinase subunit alpha (992 aa).

Residues 1 to 558 (MNNSVYGVAF…LYSNFMSTTV (558 aa)) are N-terminal catalytic PFK domain 1. Residues Gly193, 256–257 (RS), and 286–289 (GDGS) contribute to the ATP site. Residue Asp287 coordinates Mg(2+). Residues 332-334 (SID), Arg369, 376-378 (MGR), Glu433, Lys460, and 466-469 (HVQR) each bind beta-D-fructose 6-phosphate. Residue Asp334 is the Proton acceptor of the active site. The interdomain linker stretch occupies residues 559-572 (NDDGSQLLPEADRL). The interval 573–992 (NIAIVHVGAP…AAKEDSALYV (420 aa)) is C-terminal regulatory PFK domain 2. Beta-D-fructose 2,6-bisphosphate is bound by residues Arg643, 700-704 (TVSNN), Arg738, 745-747 (QGG), Glu805, Arg831, 837-840 (HVQQ), and Arg929.

This sequence belongs to the phosphofructokinase type A (PFKA) family. ATP-dependent PFK group I subfamily. Eukaryotic two domain clade 'E' sub-subfamily. As to quaternary structure, heterooctamer of 4 alpha and 4 beta chains. It depends on Mg(2+) as a cofactor.

It is found in the cytoplasm. It catalyses the reaction beta-D-fructose 6-phosphate + ATP = beta-D-fructose 1,6-bisphosphate + ADP + H(+). It functions in the pathway carbohydrate degradation; glycolysis; D-glyceraldehyde 3-phosphate and glycerone phosphate from D-glucose: step 3/4. Allosterically activated by ADP, AMP, or fructose 2,6-bisphosphate, and allosterically inhibited by ATP or citrate. Functionally, catalyzes the phosphorylation of D-fructose 6-phosphate to fructose 1,6-bisphosphate by ATP, the first committing step of glycolysis. The chain is ATP-dependent 6-phosphofructokinase subunit alpha (PFK1) from Kluyveromyces lactis (strain ATCC 8585 / CBS 2359 / DSM 70799 / NBRC 1267 / NRRL Y-1140 / WM37) (Yeast).